The sequence spans 324 residues: UDP-N-acetylenolpyruvoylglucosamine reductase (324 aa).

An FAD-binding PCMH-type domain is found at 36–211 (FRAGGLAELM…AEDKAKIRND (176 aa)). Arg-183 is a catalytic residue. Ser-232 (proton donor) is an active-site residue. The active site involves Glu-302.

This sequence belongs to the MurB family. FAD is required as a cofactor.

The protein resides in the cytoplasm. The enzyme catalyses UDP-N-acetyl-alpha-D-muramate + NADP(+) = UDP-N-acetyl-3-O-(1-carboxyvinyl)-alpha-D-glucosamine + NADPH + H(+). The protein operates within cell wall biogenesis; peptidoglycan biosynthesis. In terms of biological role, cell wall formation. In Sinorhizobium medicae (strain WSM419) (Ensifer medicae), this protein is UDP-N-acetylenolpyruvoylglucosamine reductase.